Consider the following 749-residue polypeptide: Patatin-like phospholipase domain-containing protein AN0408 (749 aa).

The span at 1 to 11 (MEKSAAGDNID) shows a compositional bias: basic and acidic residues. Positions 1–21 (MEKSAAGDNIDKYSPSSIPDY) are disordered. The helical transmembrane segment at 92–112 (WPFLLFVLGWITFLSVGYALT) threads the bilayer. The region spanning 280–471 (LCLSGGATFA…RTDIPIKALN (192 aa)) is the PNPLA domain. A GXSXG motif is present at residues 311–315 (GTSGG). Ser313 (nucleophile) is an active-site residue. Catalysis depends on Asp458, which acts as the Proton acceptor. Residues 630–659 (SIQPFPFDNGAAGADQKSNDPREERLNRNF) are disordered. Residues 646 to 659 (KSNDPREERLNRNF) are compositionally biased toward basic and acidic residues.

The protein belongs to the PLPL family.

The protein resides in the membrane. In terms of biological role, probable lipid hydrolase. The chain is Patatin-like phospholipase domain-containing protein AN0408 from Emericella nidulans (strain FGSC A4 / ATCC 38163 / CBS 112.46 / NRRL 194 / M139) (Aspergillus nidulans).